The chain runs to 122 residues: Large ribosomal subunit protein uL14 (122 aa).

This sequence belongs to the universal ribosomal protein uL14 family. In terms of assembly, part of the 50S ribosomal subunit. Forms a cluster with proteins L3 and L19. In the 70S ribosome, L14 and L19 interact and together make contacts with the 16S rRNA in bridges B5 and B8.

Binds to 23S rRNA. Forms part of two intersubunit bridges in the 70S ribosome. The sequence is that of Large ribosomal subunit protein uL14 from Amoebophilus asiaticus (strain 5a2).